Here is a 592-residue protein sequence, read N- to C-terminus: uncharacterized protein (592 aa).

Transmembrane regions (helical) follow at residues 12–32 (IWIL…IFLL), 58–78 (PILF…ISLV), 102–122 (MGLF…SYYL), 191–211 (ISYT…GVEI), 214–234 (MMVF…FWLG), and 299–319 (FSGF…LIQV). The ABC transmembrane type-1 domain occupies 58–358 (PILFFLLIVA…FRSTYDNFAS (301 aa)). The 202-residue stretch at 391 to 592 (VIFKNLSIQN…LQDKGQWQVL (202 aa)) folds into the ABC transporter domain. 424 to 431 (GKSGAGKT) provides a ligand contact to ATP.

Belongs to the ABC transporter superfamily.

It localises to the cell inner membrane. This is an uncharacterized protein from Haemophilus influenzae (strain ATCC 51907 / DSM 11121 / KW20 / Rd).